Here is a 559-residue protein sequence, read N- to C-terminus: Glucose-6-phosphate isomerase 2 (559 aa).

Residue glutamate 367 is the Proton donor of the active site. Residues histidine 398 and lysine 522 contribute to the active site.

This sequence belongs to the GPI family.

It localises to the cytoplasm. The catalysed reaction is alpha-D-glucose 6-phosphate = beta-D-fructose 6-phosphate. The protein operates within carbohydrate biosynthesis; gluconeogenesis. It functions in the pathway carbohydrate degradation; glycolysis; D-glyceraldehyde 3-phosphate and glycerone phosphate from D-glucose: step 2/4. In terms of biological role, catalyzes the reversible isomerization of glucose-6-phosphate to fructose-6-phosphate. In Chromohalobacter salexigens (strain ATCC BAA-138 / DSM 3043 / CIP 106854 / NCIMB 13768 / 1H11), this protein is Glucose-6-phosphate isomerase 2.